The following is a 240-amino-acid chain: Ribonuclease 3 (240 aa).

In terms of domain architecture, RNase III spans 9 to 141; the sequence is VEEFQKKTGI…LLAAIYLDQG (133 aa). Glu-54 is a binding site for Mg(2+). Residue Asp-58 is part of the active site. 2 residues coordinate Mg(2+): Asp-127 and Glu-130. Glu-130 is a catalytic residue. The 70-residue stretch at 168–237 folds into the DRBM domain; that stretch reads DYKTALQEIV…ARIAYEKLLK (70 aa).

This sequence belongs to the ribonuclease III family. As to quaternary structure, homodimer. Mg(2+) serves as cofactor.

It localises to the cytoplasm. The catalysed reaction is Endonucleolytic cleavage to 5'-phosphomonoester.. Its function is as follows. Digests double-stranded RNA. Involved in the processing of primary rRNA transcript to yield the immediate precursors to the large and small rRNAs (23S and 16S). Processes some mRNAs, and tRNAs when they are encoded in the rRNA operon. Processes pre-crRNA and tracrRNA of type II CRISPR loci if present in the organism. This is Ribonuclease 3 from Thermotoga sp. (strain RQ2).